The chain runs to 563 residues: Alpha-keto-acid decarboxylase (563 aa).

Glu59 is a binding site for thiamine diphosphate. The tract at residues 348–367 is disordered; it reads SPPVASPPAEPLPPPPPREQ. Over residues 351–366 the composition is skewed to pro residues; it reads VASPPAEPLPPPPPRE. Residues 394 to 476 are thiamine pyrophosphate binding; sequence TSFYGMADHR…VVVNNDGYTV (83 aa). Mg(2+) is bound by residues Asp444, Asn471, and Gly473.

It belongs to the TPP enzyme family. A metal cation serves as cofactor. The cofactor is thiamine diphosphate.

Functionally, decarboxylates branched-chain and aromatic alpha-keto acids to aldehydes. The polypeptide is Alpha-keto-acid decarboxylase (kdc) (Mycobacterium avium (strain 104)).